An 81-amino-acid chain; its full sequence is Antitoxin VapB28 (81 aa).

Functionally, antitoxin component of a type II toxin-antitoxin (TA) system. This Mycobacterium tuberculosis (strain CDC 1551 / Oshkosh) protein is Antitoxin VapB28 (vapB28).